Reading from the N-terminus, the 91-residue chain is HssA/B-like protein 52 (91 aa).

2 disordered regions span residues 1-20 (MTLF…SKSS) and 72-91 (GGCG…CCGI).

It belongs to the hssA/B family.

The sequence is that of HssA/B-like protein 52 (hssl52) from Dictyostelium discoideum (Social amoeba).